The sequence spans 937 residues: Periplasmic nitrate reductase (937 aa).

Positions 1-42 form a signal peptide, tat-type signal; it reads MTSKIQGKKPTLSRRDFIKSAAAASAAASVGLSIPSVMSAEA. A 4Fe-4S Mo/W bis-MGD-type domain is found at 49–110; the sequence is WKWDKSVCRF…FCAKIMYGAD (62 aa). Residues cysteine 56, cysteine 59, cysteine 63, and cysteine 96 each contribute to the [4Fe-4S] cluster site. Residues lysine 98, glutamine 166, asparagine 191, cysteine 195, 228–235, methionine 433, glutamine 437, asparagine 543, 568–569, lysine 591, aspartate 618, and 827–836 each bind Mo-bis(molybdopterin guanine dinucleotide); these read WGANMAEM, SE, and TGRVLEHWHS. Tryptophan 903 contacts substrate. Mo-bis(molybdopterin guanine dinucleotide) contacts are provided by asparagine 911 and lysine 928.

Belongs to the prokaryotic molybdopterin-containing oxidoreductase family. NasA/NapA/NarB subfamily. In terms of assembly, component of the periplasmic nitrate reductase NapAB complex composed of NapA and NapB. The cofactor is [4Fe-4S] cluster. Mo-bis(molybdopterin guanine dinucleotide) is required as a cofactor. Predicted to be exported by the Tat system. The position of the signal peptide cleavage has not been experimentally proven.

It localises to the periplasm. The enzyme catalyses 2 Fe(II)-[cytochrome] + nitrate + 2 H(+) = 2 Fe(III)-[cytochrome] + nitrite + H2O. In terms of biological role, catalytic subunit of the periplasmic nitrate reductase complex NapAB. Receives electrons from NapB and catalyzes the reduction of nitrate to nitrite. The protein is Periplasmic nitrate reductase of Helicobacter hepaticus (strain ATCC 51449 / 3B1).